Here is a 126-residue protein sequence, read N- to C-terminus: uncharacterized protein (126 aa).

The segment at 1-27 (MSKSKTPNFDDMEVLDDTNDEYDDSES) is disordered. Residues 10 to 27 (DDMEVLDDTNDEYDDSES) are compositionally biased toward acidic residues.

This is an uncharacterized protein from Halorubrum sp. PV6 (HRPV-1).